The sequence spans 540 residues: Mitochondrial distribution and morphology protein 34 (540 aa).

One can recognise an SMP-LTD domain in the interval 1-208; it reads MSFKFNSGTF…LPSVIFNMSQ (208 aa). Disordered stretches follow at residues 26 to 51 and 379 to 399; these read ALNPSRFENPESTSGQDGSDSQKKPK and RSKSVQDTAAKMHPVPESGSL. Residues 35-44 are compositionally biased toward polar residues; the sequence is PESTSGQDGS.

The protein belongs to the MDM34 family. Component of the ER-mitochondria encounter structure (ERMES) or MDM complex, composed of MMM1, MDM10, MDM12 and MDM34.

Its subcellular location is the mitochondrion outer membrane. In terms of biological role, component of the ERMES/MDM complex, which serves as a molecular tether to connect the endoplasmic reticulum (ER) and mitochondria. Components of this complex are involved in the control of mitochondrial shape and protein biogenesis, and function in nonvesicular lipid trafficking between the ER and mitochondria. MDM34 is required for the interaction of the ER-resident membrane protein MMM1 and the outer mitochondrial membrane-resident beta-barrel protein MDM10. The chain is Mitochondrial distribution and morphology protein 34 from Kluyveromyces lactis (strain ATCC 8585 / CBS 2359 / DSM 70799 / NBRC 1267 / NRRL Y-1140 / WM37) (Yeast).